Reading from the N-terminus, the 217-residue chain is LexA repressor (217 aa).

The segment at residues 28–48 is a DNA-binding region (H-T-H motif); that stretch reads RAEIAAEFGFSSPNAAEEHLR. Residues Ser136 and Lys173 each act as for autocatalytic cleavage activity in the active site.

The protein belongs to the peptidase S24 family. Homodimer.

It carries out the reaction Hydrolysis of Ala-|-Gly bond in repressor LexA.. In terms of biological role, represses a number of genes involved in the response to DNA damage (SOS response), including recA and lexA. In the presence of single-stranded DNA, RecA interacts with LexA causing an autocatalytic cleavage which disrupts the DNA-binding part of LexA, leading to derepression of the SOS regulon and eventually DNA repair. The chain is LexA repressor from Cupriavidus necator (strain ATCC 17699 / DSM 428 / KCTC 22496 / NCIMB 10442 / H16 / Stanier 337) (Ralstonia eutropha).